The primary structure comprises 116 residues: MFGYMEISVRVEIGKQNSRIHKLELWKLMEEGLHTLMKEEKLDIMLKEEANFGFCRWLNTRGNWLYLEDMRKPILIEFQNFFNCLNYPSRVYKLTVQNNDYKLGSIRDLRIKLFFF.

This Bos taurus (Bovine) protein is Protein alpha-2 (alpha).